The chain runs to 203 residues: Outer-membrane lipoprotein carrier protein (203 aa).

Residues 1 to 21 form the signal peptide; the sequence is MKKMAIACALLSSVVASSVWA. A disordered region spans residues 178–203; that stretch reads QQNGAVEPSKFTFTPPQGVTIDDQRK.

This sequence belongs to the LolA family. In terms of assembly, monomer.

Its subcellular location is the periplasm. In terms of biological role, participates in the translocation of lipoproteins from the inner membrane to the outer membrane. Only forms a complex with a lipoprotein if the residue after the N-terminal Cys is not an aspartate (The Asp acts as a targeting signal to indicate that the lipoprotein should stay in the inner membrane). In Salmonella typhi, this protein is Outer-membrane lipoprotein carrier protein.